The primary structure comprises 105 residues: uncharacterized protein (105 aa).

This is an uncharacterized protein from Fowlpox virus (strain NVSL) (FPV).